The sequence spans 375 residues: N-acetylneuraminate epimerase (375 aa).

Residues 1–22 (MKLTKTALCTALFATFTFSANA) form the signal peptide. Kelch repeat units follow at residues 43 to 87 (TVYV…AAVD), 89 to 140 (KLYV…ASHG), 142 to 176 (KVYI…EIVA), 177 to 222 (AYFD…TIQG), 225 to 273 (LVVV…LAGA), 295 to 344 (KQFK…SYNN), and 346 to 375 (VLLI…LTVE). The active-site Proton acceptor is the Glu231.

The protein belongs to the NanM family. In terms of assembly, homodimer.

It localises to the periplasm. The catalysed reaction is N-acetyl-alpha-neuraminate = N-acetyl-beta-neuraminate. In terms of biological role, converts alpha-N-acetylneuranimic acid (Neu5Ac) to the beta-anomer, accelerating the equilibrium between the alpha- and beta-anomers. Probably facilitates sialidase-negative bacteria to compete successfully for limited amounts of extracellular Neu5Ac, which is likely taken up in the beta-anomer. In addition, the rapid removal of sialic acid from solution might be advantageous to the bacterium to damp down host responses. This Haemophilus influenzae (strain 86-028NP) protein is N-acetylneuraminate epimerase.